The sequence spans 198 residues: Small ribosomal subunit protein uS4c (198 aa).

The tract at residues 17–40 is disordered; that stretch reads TLPGLTSKRPKNRKDSMNRSSSRK. The S4 RNA-binding domain occupies 88–154; that stretch reads MRLDKSFSIG…IKKNIDLFQR (67 aa).

Belongs to the universal ribosomal protein uS4 family. In terms of assembly, part of the 30S ribosomal subunit. Contacts protein S5. The interaction surface between S4 and S5 is involved in control of translational fidelity.

The protein resides in the plastid. It is found in the chloroplast. Functionally, one of the primary rRNA binding proteins, it binds directly to 16S rRNA where it nucleates assembly of the body of the 30S subunit. Its function is as follows. With S5 and S12 plays an important role in translational accuracy. This is Small ribosomal subunit protein uS4c (rps4) from Pinus thunbergii (Japanese black pine).